A 314-amino-acid chain; its full sequence is L-lactate dehydrogenase 2 (314 aa).

Residues Val-16, Asp-37, Lys-42, Tyr-68, and 82-83 (GL) each bind NAD(+). Substrate is bound by residues Gln-85, Arg-91, and 123–126 (NPVD). Residues 121 to 123 (ATN) and Ser-146 each bind NAD(+). A substrate-binding site is contributed by 151–154 (DSAR). Positions 156 and 171 each coordinate beta-D-fructose 1,6-bisphosphate. The active-site Proton acceptor is the His-178. Phosphotyrosine is present on Tyr-223. A substrate-binding site is contributed by Thr-232.

This sequence belongs to the LDH/MDH superfamily. LDH family. In terms of assembly, homotetramer.

The protein localises to the cytoplasm. It carries out the reaction (S)-lactate + NAD(+) = pyruvate + NADH + H(+). The protein operates within fermentation; pyruvate fermentation to lactate; (S)-lactate from pyruvate: step 1/1. Allosterically activated by fructose 1,6-bisphosphate (FBP). Its function is as follows. Catalyzes the conversion of lactate to pyruvate. The polypeptide is L-lactate dehydrogenase 2 (Bacillus cereus (strain ATCC 14579 / DSM 31 / CCUG 7414 / JCM 2152 / NBRC 15305 / NCIMB 9373 / NCTC 2599 / NRRL B-3711)).